A 406-amino-acid polypeptide reads, in one-letter code: Acetylornithine/succinyldiaminopimelate aminotransferase (406 aa).

Residues 108–109 and Phe-141 contribute to the pyridoxal 5'-phosphate site; that span reads GT. Arg-144 is a N(2)-acetyl-L-ornithine binding site. Pyridoxal 5'-phosphate is bound at residue 226–229; the sequence is DEVQ. Lys-255 is modified (N6-(pyridoxal phosphate)lysine). Ser-283 provides a ligand contact to N(2)-acetyl-L-ornithine. Thr-284 is a binding site for pyridoxal 5'-phosphate.

It belongs to the class-III pyridoxal-phosphate-dependent aminotransferase family. ArgD subfamily. As to quaternary structure, homodimer. Pyridoxal 5'-phosphate is required as a cofactor.

It localises to the cytoplasm. It carries out the reaction N(2)-acetyl-L-ornithine + 2-oxoglutarate = N-acetyl-L-glutamate 5-semialdehyde + L-glutamate. It catalyses the reaction N-succinyl-(2S,6S)-2,6-diaminopimelate + 2-oxoglutarate = (S)-2-succinylamino-6-oxoheptanedioate + L-glutamate. Its pathway is amino-acid biosynthesis; L-arginine biosynthesis; N(2)-acetyl-L-ornithine from L-glutamate: step 4/4. It participates in amino-acid biosynthesis; L-lysine biosynthesis via DAP pathway; LL-2,6-diaminopimelate from (S)-tetrahydrodipicolinate (succinylase route): step 2/3. Its function is as follows. Involved in both the arginine and lysine biosynthetic pathways. This chain is Acetylornithine/succinyldiaminopimelate aminotransferase, found in Escherichia coli O6:H1 (strain CFT073 / ATCC 700928 / UPEC).